The primary structure comprises 148 residues: 3-dehydroquinate dehydratase (148 aa).

Residue Y24 is the Proton acceptor of the active site. Substrate-binding residues include N75, H81, and D88. Catalysis depends on H101, which acts as the Proton donor. Substrate is bound by residues 102-103 (LS) and R112.

Belongs to the type-II 3-dehydroquinase family. In terms of assembly, homododecamer.

The enzyme catalyses 3-dehydroquinate = 3-dehydroshikimate + H2O. Its pathway is metabolic intermediate biosynthesis; chorismate biosynthesis; chorismate from D-erythrose 4-phosphate and phosphoenolpyruvate: step 3/7. Functionally, catalyzes a trans-dehydration via an enolate intermediate. In Sinorhizobium medicae (strain WSM419) (Ensifer medicae), this protein is 3-dehydroquinate dehydratase.